The primary structure comprises 285 residues: Probable endonuclease 4 (285 aa).

Positions 69, 109, 145, 179, 182, 216, 229, 231, and 261 each coordinate Zn(2+).

Belongs to the AP endonuclease 2 family. Zn(2+) is required as a cofactor.

The catalysed reaction is Endonucleolytic cleavage to 5'-phosphooligonucleotide end-products.. Endonuclease IV plays a role in DNA repair. It cleaves phosphodiester bonds at apurinic or apyrimidinic (AP) sites, generating a 3'-hydroxyl group and a 5'-terminal sugar phosphate. In Escherichia coli O1:K1 / APEC, this protein is Probable endonuclease 4.